A 340-amino-acid chain; its full sequence is Citramalyl-CoA lyase, mitochondrial (340 aa).

A mitochondrion-targeting transit peptide spans 1–22; sequence MALRLLRRAARGAAAAALLRLK. Residues tyrosine 50, lysine 57, and lysine 61 each contribute to the substrate site. N6-acetyllysine is present on residues lysine 57 and lysine 61. An N6-acetyllysine; alternate mark is found at lysine 82 and lysine 92. N6-succinyllysine; alternate occurs at positions 82 and 92. Substrate is bound at residue arginine 107. Residues glutamate 171 and aspartate 206 each contribute to the Mg(2+) site. Position 272–273 (272–273) interacts with substrate; it reads IH. At lysine 309 the chain carries N6-succinyllysine. Aspartate 320 is a catalytic residue.

The protein belongs to the HpcH/HpaI aldolase family. Citrate lyase beta subunit-like subfamily. In terms of assembly, homotrimer. The cofactor is Mg(2+).

The protein localises to the mitochondrion. The enzyme catalyses glyoxylate + acetyl-CoA + H2O = (S)-malate + CoA + H(+). It carries out the reaction propanoyl-CoA + glyoxylate + H2O = 3-methylmalate + CoA + H(+). It catalyses the reaction (3S)-citramalyl-CoA = pyruvate + acetyl-CoA. The catalysed reaction is (S)-malyl-CoA + H2O = (S)-malate + CoA + H(+). Functionally, mitochondrial citramalyl-CoA lyase indirectly involved in the vitamin B12 metabolism. Converts citramalyl-CoA into acetyl-CoA and pyruvate in the C5-dicarboxylate catabolism pathway. The C5-dicarboxylate catabolism pathway is required to detoxify itaconate, a vitamin B12-poisoning metabolite. Also acts as a malate synthase in vitro, converting glyoxylate and acetyl-CoA to malate. Also displays malyl-CoA thioesterase activity. Also acts as a beta-methylmalate synthase in vitro, by mediating conversion of glyoxylate and propionyl-CoA to beta-methylmalate. Also has very weak citramalate synthase activity in vitro. This chain is Citramalyl-CoA lyase, mitochondrial, found in Homo sapiens (Human).